The following is a 139-amino-acid chain: Membrane protein YqfB (139 aa).

Residues Asp-3–Gly-23 form a helical membrane-spanning segment. Residues Lys-25–Arg-87 form a disordered region. Residues Asn-62–Val-97 adopt a coiled-coil conformation. The segment covering Glu-65–Arg-87 has biased composition (basic and acidic residues).

It localises to the cell membrane. The polypeptide is Membrane protein YqfB (yqfB) (Bacillus subtilis (strain 168)).